Consider the following 254-residue polypeptide: MTAKRIIPCLDVDAGRVVKGVRFVDIRDAGDPVEIARRYDAMGADELTFLDITASHEERETIYDVVEAVAGQVFIPLTVGGGVRSVADVRRLLNAGADKVAINTAAVHRPDFVREAAERFGSQCIVVAVDAKQVEDDPPRWEVFTHGGRNPTGLEVVSWCQRLVALGAGEILLTSMDRDGTRAGFDLGLTRAVADAVSVPVIASGGVGELEHLADGVDDGGADAVLAASIFHFGDHTVGEAKAHMAERGIEVRR.

Catalysis depends on residues Asp-11 and Asp-130.

Belongs to the HisA/HisF family. Heterodimer of HisH and HisF.

The protein localises to the cytoplasm. The enzyme catalyses 5-[(5-phospho-1-deoxy-D-ribulos-1-ylimino)methylamino]-1-(5-phospho-beta-D-ribosyl)imidazole-4-carboxamide + L-glutamine = D-erythro-1-(imidazol-4-yl)glycerol 3-phosphate + 5-amino-1-(5-phospho-beta-D-ribosyl)imidazole-4-carboxamide + L-glutamate + H(+). The protein operates within amino-acid biosynthesis; L-histidine biosynthesis; L-histidine from 5-phospho-alpha-D-ribose 1-diphosphate: step 5/9. Its function is as follows. IGPS catalyzes the conversion of PRFAR and glutamine to IGP, AICAR and glutamate. The HisF subunit catalyzes the cyclization activity that produces IGP and AICAR from PRFAR using the ammonia provided by the HisH subunit. The sequence is that of Imidazole glycerol phosphate synthase subunit HisF from Halorhodospira halophila (strain DSM 244 / SL1) (Ectothiorhodospira halophila (strain DSM 244 / SL1)).